The chain runs to 208 residues: MKINVVDHPLIKHKLTLMRKKDTGPKEFRELLKEITLLIAYEATRHIETFETEIETPLEKTKGHFINDKDVVIIPILRAGLGMSDGILQLLPNASVGHIGIYRDPKTLEAVEYYAKFPKITDNSIVFVLDPMLATGVSSIKALEIVKKNGAKNIILVTLIASPEGTEKVNIEHPDVIIYTASLDKKLNSKGYILPGLGDAGDRLFRTK.

Residues R78, R103, and 130–138 (DPMLATGVS) each bind 5-phospho-alpha-D-ribose 1-diphosphate. Residues I193 and 198–200 (GDA) each bind uracil. 5-phospho-alpha-D-ribose 1-diphosphate is bound at residue D199.

Belongs to the UPRTase family. Mg(2+) serves as cofactor.

The catalysed reaction is UMP + diphosphate = 5-phospho-alpha-D-ribose 1-diphosphate + uracil. It participates in pyrimidine metabolism; UMP biosynthesis via salvage pathway; UMP from uracil: step 1/1. With respect to regulation, allosterically activated by GTP. In terms of biological role, catalyzes the conversion of uracil and 5-phospho-alpha-D-ribose 1-diphosphate (PRPP) to UMP and diphosphate. The polypeptide is Uracil phosphoribosyltransferase (Thermosipho melanesiensis (strain DSM 12029 / CIP 104789 / BI429)).